Here is a 65-residue protein sequence, read N- to C-terminus: Neurotoxin BmK AGAP-SYPU2 (65 aa).

An LCN-type CS-alpha/beta domain is found at 2–64 (KDGYIVDDKN…VPIRVPGRCN (63 aa)). Disulfide bonds link Cys12–Cys63, Cys16–Cys36, Cys22–Cys46, and Cys26–Cys48.

In terms of tissue distribution, expressed by the venom gland.

Its subcellular location is the secreted. Alpha toxins bind voltage-independently at site-3 of sodium channels and inhibit the inactivation of the activated channels, thereby blocking neuronal transmission. In vivo, shows analgesic activity (ED(50) is 1.42 mg/kg) and antitumor activity against Ehrlich ascites tumor and S-180 fibrosarcoma models. The polypeptide is Neurotoxin BmK AGAP-SYPU2 (Olivierus martensii (Manchurian scorpion)).